The chain runs to 202 residues: ATP-dependent Clp protease proteolytic subunit (202 aa).

Residue S106 is the Nucleophile of the active site. H131 is a catalytic residue.

The protein belongs to the peptidase S14 family. Fourteen ClpP subunits assemble into 2 heptameric rings which stack back to back to give a disk-like structure with a central cavity, resembling the structure of eukaryotic proteasomes.

The protein localises to the cytoplasm. The enzyme catalyses Hydrolysis of proteins to small peptides in the presence of ATP and magnesium. alpha-casein is the usual test substrate. In the absence of ATP, only oligopeptides shorter than five residues are hydrolyzed (such as succinyl-Leu-Tyr-|-NHMec, and Leu-Tyr-Leu-|-Tyr-Trp, in which cleavage of the -Tyr-|-Leu- and -Tyr-|-Trp bonds also occurs).. Its function is as follows. Cleaves peptides in various proteins in a process that requires ATP hydrolysis. Has a chymotrypsin-like activity. Plays a major role in the degradation of misfolded proteins. The polypeptide is ATP-dependent Clp protease proteolytic subunit (Shewanella sp. (strain MR-7)).